An 859-amino-acid chain; its full sequence is Photoactivated adenylate cyclase subunit beta (859 aa).

One can recognise a BLUF 1 domain in the interval 56 to 149; the sequence is LRRLMYLSKS…GRMYGDWHMK (94 aa). The 129-residue stretch at 205 to 333 folds into the Guanylate cyclase 1 domain; it reads VVTFIYLVEF…DCINTTSRIA (129 aa). A disordered region spans residues 420–443; it reads RPPIFDDTPKGNPRPRTPGYGGRQ. The 93-residue stretch at 471 to 563 folds into the BLUF 2 domain; that stretch reads LTTLTYISQA…RVYPSEWTLT (93 aa). A Guanylate cyclase 2 domain is found at 619 to 748; sequence VMLATDICSF…AVSARVMEVE (130 aa). The disordered stretch occupies residues 813–859; the sequence is AARSGEKPLTEPEEAKPDFRVSPGRVRHGDSGRRSNSAQGKRSIQVR. The span at 815-831 shows a compositional bias: basic and acidic residues; sequence RSGEKPLTEPEEAKPDF. Positions 846–859 are enriched in polar residues; it reads RSNSAQGKRSIQVR.

The protein belongs to the adenylyl cyclase class-4/guanylyl cyclase family. Heterotetramer of two alpha and two beta subunits. It depends on FAD as a cofactor.

It localises to the cell projection. It is found in the cilium. Its subcellular location is the flagellum. It catalyses the reaction ATP = 3',5'-cyclic AMP + diphosphate. Activity increased by up to 80-fold under blue light. In terms of biological role, acts as a blue light photoreceptor for the step-up photophobic response. Mediates photoavoidance. This is Photoactivated adenylate cyclase subunit beta from Euglena gracilis.